The primary structure comprises 106 residues: UPF0145 protein CLH_2273 (106 aa).

The protein belongs to the UPF0145 family.

This is UPF0145 protein CLH_2273 from Clostridium botulinum (strain Alaska E43 / Type E3).